Here is a 220-residue protein sequence, read N- to C-terminus: 7-carboxy-7-deazaguanine synthase (220 aa).

Substrate contacts are provided by residues isoleucine 16 to glycine 18 and arginine 31. The Radical SAM core domain maps to phenylalanine 22–proline 215. Positions 35, 39, and 42 each coordinate [4Fe-4S] cluster. Threonine 44 is a binding site for Mg(2+). Substrate is bound at residue threonine 74. Glycine 76 is a binding site for S-adenosyl-L-methionine.

This sequence belongs to the radical SAM superfamily. 7-carboxy-7-deazaguanine synthase family. In terms of assembly, homodimer. The cofactor is [4Fe-4S] cluster. S-adenosyl-L-methionine serves as cofactor. Mg(2+) is required as a cofactor.

It catalyses the reaction 6-carboxy-5,6,7,8-tetrahydropterin + H(+) = 7-carboxy-7-deazaguanine + NH4(+). Its pathway is purine metabolism; 7-cyano-7-deazaguanine biosynthesis. In terms of biological role, catalyzes the complex heterocyclic radical-mediated conversion of 6-carboxy-5,6,7,8-tetrahydropterin (CPH4) to 7-carboxy-7-deazaguanine (CDG), a step common to the biosynthetic pathways of all 7-deazapurine-containing compounds. The chain is 7-carboxy-7-deazaguanine synthase from Chlorobaculum tepidum (strain ATCC 49652 / DSM 12025 / NBRC 103806 / TLS) (Chlorobium tepidum).